A 201-amino-acid chain; its full sequence is Potassium-transporting ATPase KdpC subunit (201 aa).

The helical transmembrane segment at 7–27 (PAIVLLLVLTAITGLAYPLAM) threads the bilayer.

It belongs to the KdpC family. As to quaternary structure, the system is composed of three essential subunits: KdpA, KdpB and KdpC.

It is found in the cell inner membrane. Its function is as follows. Part of the high-affinity ATP-driven potassium transport (or Kdp) system, which catalyzes the hydrolysis of ATP coupled with the electrogenic transport of potassium into the cytoplasm. This subunit acts as a catalytic chaperone that increases the ATP-binding affinity of the ATP-hydrolyzing subunit KdpB by the formation of a transient KdpB/KdpC/ATP ternary complex. This is Potassium-transporting ATPase KdpC subunit from Bradyrhizobium diazoefficiens (strain JCM 10833 / BCRC 13528 / IAM 13628 / NBRC 14792 / USDA 110).